The primary structure comprises 181 residues: uncharacterized protein (181 aa).

The interval 162-181 (QARGPAGTRTPQRRCSSHEA) is disordered.

This is an uncharacterized protein from Homo sapiens (Human).